Reading from the N-terminus, the 136-residue chain is T-cell receptor beta chain V region LB2 (136 aa).

The signal sequence occupies residues 1–21 (MNKWVFCWVTLCLLTVETTHG). Residues 22–116 (DGGIITQTPK…EMTVFLCASS (95 aa)) are v segment. The cysteines at positions 45 and 113 are disulfide-linked. A d segment region spans residues 117 to 120 (IRLA). Positions 121 to 136 (SAETLYFGSGTRLTVL) are j segment.

This Mus musculus (Mouse) protein is T-cell receptor beta chain V region LB2.